We begin with the raw amino-acid sequence, 606 residues long: Sulfite reductase [NADPH] flavoprotein alpha-component (606 aa).

The 139-residue stretch at 64 to 202 (VTLISASQTG…QAQQWRQQVV (139 aa)) folds into the Flavodoxin-like domain. Residues 70–75 (SQTGNA), 117–120 (STQG), and 153–162 (LGDTSYEHFC) contribute to the FMN site. A compositionally biased stretch (low complexity) spans 212–234 (QSTAPTQSTTPAAAAITSGGTTT). The disordered stretch occupies residues 212–235 (QSTAPTQSTTPAAAAITSGGTTTV). The region spanning 241 to 455 (TAPLTAQLSV…IEHNDNFRLP (215 aa)) is the FAD-binding FR-type domain. FAD is bound by residues Thr-329, Lys-363, 393-396 (RLYS), 411-413 (TVG), Tyr-417, and 426-429 (GGAS). NADP(+)-binding positions include 526 to 527 (SR), 532 to 536 (KIYVQ), and Asp-568. Residue Tyr-606 participates in FAD binding.

This sequence belongs to the NADPH-dependent sulphite reductase flavoprotein subunit CysJ family. It in the N-terminal section; belongs to the flavodoxin family. In the C-terminal section; belongs to the flavoprotein pyridine nucleotide cytochrome reductase family. As to quaternary structure, alpha(8)-beta(8). The alpha component is a flavoprotein, the beta component is a hemoprotein. FAD is required as a cofactor. FMN serves as cofactor.

It carries out the reaction hydrogen sulfide + 3 NADP(+) + 3 H2O = sulfite + 3 NADPH + 4 H(+). The protein operates within sulfur metabolism; hydrogen sulfide biosynthesis; hydrogen sulfide from sulfite (NADPH route): step 1/1. Component of the sulfite reductase complex that catalyzes the 6-electron reduction of sulfite to sulfide. This is one of several activities required for the biosynthesis of L-cysteine from sulfate. The flavoprotein component catalyzes the electron flow from NADPH -&gt; FAD -&gt; FMN to the hemoprotein component. This Yersinia pestis bv. Antiqua (strain Antiqua) protein is Sulfite reductase [NADPH] flavoprotein alpha-component.